The chain runs to 142 residues: Large ribosomal subunit protein uL11 (142 aa).

It belongs to the universal ribosomal protein uL11 family. As to quaternary structure, part of the ribosomal stalk of the 50S ribosomal subunit. Interacts with L10 and the large rRNA to form the base of the stalk. L10 forms an elongated spine to which L12 dimers bind in a sequential fashion forming a multimeric L10(L12)X complex. One or more lysine residues are methylated.

Its function is as follows. Forms part of the ribosomal stalk which helps the ribosome interact with GTP-bound translation factors. The protein is Large ribosomal subunit protein uL11 of Acinetobacter baylyi (strain ATCC 33305 / BD413 / ADP1).